We begin with the raw amino-acid sequence, 359 residues long: Protein RecA (359 aa).

64–71 contacts ATP; that stretch reads GHESSGKT. Positions 329 to 359 are disordered; it reads KYSNKDSNDSPKEGSKIKTKVNPAVTQDELI. Residues 331-344 show a composition bias toward basic and acidic residues; that stretch reads SNKDSNDSPKEGSK.

This sequence belongs to the RecA family.

The protein localises to the cytoplasm. In terms of biological role, can catalyze the hydrolysis of ATP in the presence of single-stranded DNA, the ATP-dependent uptake of single-stranded DNA by duplex DNA, and the ATP-dependent hybridization of homologous single-stranded DNAs. It interacts with LexA causing its activation and leading to its autocatalytic cleavage. The polypeptide is Protein RecA (Francisella tularensis subsp. tularensis (strain FSC 198)).